The following is a 1350-amino-acid chain: ABC transporter G family member 45 (1350 aa).

Positions 1 to 23 (MAAAVELTGDGGTTAETRWLSPP) are disordered. The ABC transporter 1 domain occupies 85-357 (AACAHMCTTR…FETMGFKCPS (273 aa)). An ATP-binding site is contributed by 118-125 (GAPGSGKT). Positions 434 to 647 (NIFKACFSRE…AQNAVALNEF (214 aa)) constitute an ABC transmembrane type-2 1 domain. A run of 6 helical transmembrane segments spans residues 453-473 (VHIF…TLFL), 491-511 (ALFM…AMTI), 523-543 (ILAL…LPIS), 557-577 (VIGY…LFAM), 597-617 (MANM…GFVI), and 683-703 (ICVS…IFAL). Residues 749-1001 (LVFDHINYFV…NMIKYFEAIP (253 aa)) form the ABC transporter 2 domain. 794-801 (GITGAGKT) contributes to the ATP binding site. Residues 1074–1288 (AQCMACLWKQ…TVYGLMFSQL (215 aa)) enclose the ABC transmembrane type-2 2 domain. 7 consecutive transmembrane segments (helical) span residues 1099-1119 (INTF…GSTI), 1126-1146 (FNIL…NCSI), 1181-1201 (LPYM…MIGF), 1208-1228 (FFWF…YGMM), 1238-1258 (IAAG…GFII), 1269-1289 (WVYW…SQLG), and 1322-1342 (LVTS…FLSI).

Belongs to the ABC transporter superfamily. ABCG family. PDR (TC 3.A.1.205) subfamily.

The protein resides in the membrane. Functionally, may be a general defense protein. The sequence is that of ABC transporter G family member 45 from Oryza sativa subsp. japonica (Rice).